Reading from the N-terminus, the 224-residue chain is Probable C-&gt;U-editing enzyme APOBEC-2 (224 aa).

The tract at residues 1–25 is disordered; it reads MAQKEEAAAATEAASQNGEDLENLD. Zn(2+)-binding residues include Glu60 and His98. Positions 64 to 169 constitute a CMP/dCMP-type deaminase domain; it reads GRNKTFLCYV…LEIQDALKKL (106 aa). Glu100 (proton donor) is an active-site residue. Zn(2+)-binding residues include Cys128 and Cys131.

It belongs to the cytidine and deoxycytidylate deaminase family. In terms of assembly, homotetramer. The cofactor is Zn(2+).

The enzyme catalyses cytidine(6666) in apoB mRNA + H2O + H(+) = uridine(6666) in apoB mRNA + NH4(+). Functionally, probable C to U editing enzyme whose physiological substrate is not yet known. Does not display detectable apoB mRNA editing. Has a low intrinsic cytidine deaminase activity. May play a role in the epigenetic regulation of gene expression through the process of active DNA demethylation. The protein is Probable C-&gt;U-editing enzyme APOBEC-2 (APOBEC2) of Pongo pygmaeus (Bornean orangutan).